The following is a 320-amino-acid chain: Aspartate carbamoyltransferase catalytic subunit (320 aa).

Carbamoyl phosphate-binding residues include arginine 68 and threonine 69. Lysine 96 is an L-aspartate binding site. Positions 118, 148, and 151 each coordinate carbamoyl phosphate. 2 residues coordinate L-aspartate: arginine 181 and arginine 236. Carbamoyl phosphate-binding residues include glycine 277 and proline 278.

It belongs to the aspartate/ornithine carbamoyltransferase superfamily. ATCase family. In terms of assembly, heterododecamer (2C3:3R2) of six catalytic PyrB chains organized as two trimers (C3), and six regulatory PyrI chains organized as three dimers (R2).

The enzyme catalyses carbamoyl phosphate + L-aspartate = N-carbamoyl-L-aspartate + phosphate + H(+). It functions in the pathway pyrimidine metabolism; UMP biosynthesis via de novo pathway; (S)-dihydroorotate from bicarbonate: step 2/3. Its function is as follows. Catalyzes the condensation of carbamoyl phosphate and aspartate to form carbamoyl aspartate and inorganic phosphate, the committed step in the de novo pyrimidine nucleotide biosynthesis pathway. The polypeptide is Aspartate carbamoyltransferase catalytic subunit (Variovorax paradoxus (strain S110)).